We begin with the raw amino-acid sequence, 308 residues long: Glutamyl-Q tRNA(Asp) synthetase (308 aa).

L-glutamate-binding positions include 19–23 (RFAPS) and Glu55. The 'HIGH' region motif lies at 22–32 (PSPSGELHFGS). Cys111, Cys113, Tyr125, and Cys129 together coordinate Zn(2+). Residues Tyr182 and Arg200 each contribute to the L-glutamate site. The 'KMSKS' region signature appears at 238 to 242 (KLSKQ). Residue Lys241 participates in ATP binding.

The protein belongs to the class-I aminoacyl-tRNA synthetase family. GluQ subfamily. Requires Zn(2+) as cofactor.

Functionally, catalyzes the tRNA-independent activation of glutamate in presence of ATP and the subsequent transfer of glutamate onto a tRNA(Asp). Glutamate is transferred on the 2-amino-5-(4,5-dihydroxy-2-cyclopenten-1-yl) moiety of the queuosine in the wobble position of the QUC anticodon. The sequence is that of Glutamyl-Q tRNA(Asp) synthetase from Escherichia coli O6:H1 (strain CFT073 / ATCC 700928 / UPEC).